The chain runs to 349 residues: Green-sensitive opsin-2 (349 aa).

At 1-36 (MNGTEGNNFYIPMSNRTGLVRSPYEYTQYYLADPWQ) the chain is on the extracellular side. N-linked (GlcNAc...) asparagine glycans are attached at residues N2 and N15. A helical transmembrane segment spans residues 37–61 (FKALAFYMFFLICFGLPINVLTLLV). The Cytoplasmic portion of the chain corresponds to 62-73 (TAQHKKLRQPLN). The helical transmembrane segment at 74–99 (YILVNLAFAGTIMAFFGFTVTFYCSI) threads the bilayer. Residues 100-113 (NGYMALGPTGCAIE) are Extracellular-facing. Residues C110 and C187 are joined by a disulfide bond. Residues 114 to 133 (GFFATLGGQVALWSLVVLAI) form a helical membrane-spanning segment. The Cytoplasmic portion of the chain corresponds to 134-152 (ERYIVVCKPMGSFKFSSNH). Residues 153-176 (AMAGIAFTWVMASSCAVPPLFGWS) form a helical membrane-spanning segment. The Extracellular segment spans residues 177-202 (RYIPEGMQTSCGPDYYTLNPEFNNES). N200 carries N-linked (GlcNAc...) asparagine glycosylation. A helical transmembrane segment spans residues 203–230 (YVLYMFSCHFCVPVTTIFFTYGSLVCTV). The Cytoplasmic portion of the chain corresponds to 231–252 (KAAAAQQQESESTQKAEREVTR). Residues 253–276 (MVILMVLGFLVAWVPYASFAAWIF) form a helical membrane-spanning segment. Topologically, residues 277–284 (FNRGAAFS) are extracellular. Residues 285–309 (AQAMAIPAFFSKASALFNPIIYVLL) form a helical membrane-spanning segment. N6-(retinylidene)lysine is present on K296. Residues 310 to 349 (NKQFRSCMLNTLFCGKSPLGDDESSSVSTSKTEVSSVSPA) lie on the Cytoplasmic side of the membrane. The segment at 328–349 (LGDDESSSVSTSKTEVSSVSPA) is disordered. Low complexity predominate over residues 334–349 (SSVSTSKTEVSSVSPA).

The protein belongs to the G-protein coupled receptor 1 family. Opsin subfamily. In terms of processing, phosphorylated on some or all of the serine and threonine residues present in the C-terminal region.

The protein localises to the membrane. Its function is as follows. Visual pigments are the light-absorbing molecules that mediate vision. They consist of an apoprotein, opsin, covalently linked to cis-retinal. The chain is Green-sensitive opsin-2 (opn1mw2) from Danio rerio (Zebrafish).